The chain runs to 388 residues: Probable fatty acid desaturase DES1 (388 aa).

Residues 1-33 (MATTPMTVVDHEAEEAVAKAREDDKSRQVDAFD) form a disordered region. The segment covering 9-30 (VDHEAEEAVAKAREDDKSRQVD) has biased composition (basic and acidic residues). A run of 2 helical transmembrane segments spans residues 62–82 (LWYVVRDVAAVVALGTAAAAM) and 85–105 (WAVWPVYWAVQGTMFWAFFVL). The Histidine box-1 signature appears at 107-111 (HDCGH). The helical transmembrane segment at 119–139 (TLNSVVGHLLHSFILIPYHGW) threads the bilayer. The Histidine box-2 motif lies at 143-147 (HRTHH). The next 3 membrane-spanning stretches (helical) occupy residues 177–194 (IRFTAPYPLLLFPLYLFY), 226–246 (WCIMLASLLAMSCAFGPLQVL), and 248–268 (MYGLPYLVFVMWLDLVTYLHH). The Histidine box-3 motif lies at 310 to 314 (HVIHH).

Belongs to the fatty acid desaturase type 1 family. As to expression, highly expressed in root hair cells. Barely detected in panicle, shoot apex, stems and leaves.

It is found in the membrane. The protein operates within lipid metabolism; polyunsaturated fatty acid biosynthesis. This is Probable fatty acid desaturase DES1 from Sorghum bicolor (Sorghum).